The primary structure comprises 253 residues: FGFR1 oncogene partner 2 homolog (253 aa).

The stretch at Ile-5–Tyr-104 forms a coiled coil. Residue Ser-140 is modified to Phosphoserine. Residues Leu-160–Glu-223 adopt a coiled-coil conformation. Residues Asp-231–Ser-253 are disordered. The segment covering Glu-235–Ser-253 has biased composition (polar residues).

This sequence belongs to the SIKE family.

The protein localises to the cytoplasm. In terms of biological role, may be involved in wound healing pathway. The polypeptide is FGFR1 oncogene partner 2 homolog (Fgfr1op2) (Mus musculus (Mouse)).